The following is a 316-amino-acid chain: Methionyl-tRNA formyltransferase (316 aa).

109 to 112 (SLLP) contacts (6S)-5,6,7,8-tetrahydrofolate.

This sequence belongs to the Fmt family.

The enzyme catalyses L-methionyl-tRNA(fMet) + (6R)-10-formyltetrahydrofolate = N-formyl-L-methionyl-tRNA(fMet) + (6S)-5,6,7,8-tetrahydrofolate + H(+). Its function is as follows. Attaches a formyl group to the free amino group of methionyl-tRNA(fMet). The formyl group appears to play a dual role in the initiator identity of N-formylmethionyl-tRNA by promoting its recognition by IF2 and preventing the misappropriation of this tRNA by the elongation apparatus. The chain is Methionyl-tRNA formyltransferase from Idiomarina loihiensis (strain ATCC BAA-735 / DSM 15497 / L2-TR).